Reading from the N-terminus, the 354-residue chain is Trans-L-3-hydroxyproline dehydratase (354 aa).

The active-site Proton acceptor is the Cys-104. Residues 105-106 (GH), Asp-269, and 274-275 (GS) contribute to the substrate site.

It belongs to the proline racemase family. In terms of assembly, homodimer.

It carries out the reaction trans-3-hydroxy-L-proline = 1-pyrroline-2-carboxylate + H2O. Functionally, catalyzes the dehydration of trans-3-hydroxy-L-proline to delta-1-pyrroline-2-carboxylate (Pyr2C). The sequence is that of Trans-L-3-hydroxyproline dehydratase (L3HYPDH) from Pongo abelii (Sumatran orangutan).